The sequence spans 471 residues: Ankyrin repeat and death domain-containing protein 1A (471 aa).

10 ANK repeats span residues 19–48 (VGRV…AVDE), 52–81 (FGMN…KIHC), 85–114 (DGLT…DVAL), 120–149 (LGRT…DHSV), 153–182 (EGNT…DLEE), 186–215 (EGLT…TVNA), 219–248 (KNLS…CTNV), 251–280 (HGAS…DLNA), 284–313 (RQQT…DLNL), and 317–346 (QGKT…FYKW). The 89-residue stretch at 379–467 (SVLWRLASRH…DLAELAVASV (89 aa)) folds into the Death domain.

This Macaca fascicularis (Crab-eating macaque) protein is Ankyrin repeat and death domain-containing protein 1A (ANKDD1A).